Here is a 180-residue protein sequence, read N- to C-terminus: dCTP deaminase, dUMP-forming (180 aa).

DCTP is bound by residues 100-105, Asp-117, 125-127, Gln-146, Tyr-160, and Gln-167; these read RSSLGR and TLE. The active-site Proton donor/acceptor is the Glu-127.

It belongs to the dCTP deaminase family. As to quaternary structure, homotrimer.

The enzyme catalyses dCTP + 2 H2O = dUMP + NH4(+) + diphosphate. It functions in the pathway pyrimidine metabolism; dUMP biosynthesis; dUMP from dCTP: step 1/1. Its function is as follows. Bifunctional enzyme that catalyzes both the deamination of dCTP to dUTP and the hydrolysis of dUTP to dUMP without releasing the toxic dUTP intermediate. This Persephonella marina (strain DSM 14350 / EX-H1) protein is dCTP deaminase, dUMP-forming.